The following is a 423-amino-acid chain: Site-specific recombinase Flp (423 aa).

Residues glycine 136 to arginine 422 form the Tyr recombinase Flp-type domain. Tyrosine 343 serves as the catalytic O-(3'-phospho-DNA)-tyrosine intermediate.

It belongs to the 'phage' integrase family. As to quaternary structure, homotetramer.

Part of the plasmid amplification system, which corrects any decrease in copy number caused by a rare missegregation event. Catalyzes the recombination between the large inverted repetitions of the 2-micron plasmid during plasmid replication. This recombination event changes the direction of one of the two replication forks in the bidirectionally replicating molecule, effectively resulting in multiple rounds of replication from a single initiation event. Binds specifically to the FLP recognition target (FRT) site where it induces DNA to bend. Three types of bend exist. Type I is approximately 60 degrees and results from 1 FLP molecule binding to 1 symmetry element. Type II is &gt;144 degrees and results from FLP molecules binding to symmetry elements a and b. Type III is approximately 65 degrees and results from FLP molecules binding to symmetry elements b and c. The polypeptide is Site-specific recombinase Flp (FLP1) (Saccharomyces cerevisiae (strain ATCC 204508 / S288c) (Baker's yeast)).